The sequence spans 34 residues: Phospholipase A2 (34 aa).

Histidine 18 is a catalytic residue. Residue aspartate 19 coordinates Ca(2+).

This sequence belongs to the phospholipase A2 family. Group I subfamily. D49 sub-subfamily. It depends on Ca(2+) as a cofactor. In terms of processing, contains 7 disulfide bonds. In terms of tissue distribution, expressed by the venom gland.

It localises to the secreted. The catalysed reaction is a 1,2-diacyl-sn-glycero-3-phosphocholine + H2O = a 1-acyl-sn-glycero-3-phosphocholine + a fatty acid + H(+). Snake venom phospholipase A2 (PLA2) that strongly inhibits platelet aggregation and has a strong anticoagulant activity. PLA2 catalyzes the calcium-dependent hydrolysis of the 2-acyl groups in 3-sn-phosphoglycerides. In Pseudechis papuanus (Papuan black snake), this protein is Phospholipase A2.